Reading from the N-terminus, the 130-residue chain is Small ribosomal subunit protein uS9 (130 aa).

A disordered region spans residues 105 to 130 (TRDARMKERKKPGLKKARKASQFSKR). Basic residues predominate over residues 111–130 (KERKKPGLKKARKASQFSKR).

It belongs to the universal ribosomal protein uS9 family.

The sequence is that of Small ribosomal subunit protein uS9 from Lactiplantibacillus plantarum (strain ATCC BAA-793 / NCIMB 8826 / WCFS1) (Lactobacillus plantarum).